The following is a 164-amino-acid chain: UPF0304 protein YfbU (164 aa).

Belongs to the UPF0304 family.

This chain is UPF0304 protein YfbU, found in Salmonella choleraesuis (strain SC-B67).